The chain runs to 236 residues: NADH-quinone oxidoreductase subunit C (236 aa).

A disordered region spans residues 1–20 (MSPPNQDAQEGRPDSPTAEV).

This sequence belongs to the complex I 30 kDa subunit family. As to quaternary structure, NDH-1 is composed of 14 different subunits. Subunits NuoB, C, D, E, F, and G constitute the peripheral sector of the complex.

The protein localises to the cell membrane. It carries out the reaction a quinone + NADH + 5 H(+)(in) = a quinol + NAD(+) + 4 H(+)(out). Functionally, NDH-1 shuttles electrons from NADH, via FMN and iron-sulfur (Fe-S) centers, to quinones in the respiratory chain. The immediate electron acceptor for the enzyme in this species is believed to be a menaquinone. Couples the redox reaction to proton translocation (for every two electrons transferred, four hydrogen ions are translocated across the cytoplasmic membrane), and thus conserves the redox energy in a proton gradient. This chain is NADH-quinone oxidoreductase subunit C, found in Mycobacterium tuberculosis (strain ATCC 25177 / H37Ra).